A 154-amino-acid chain; its full sequence is MAARLCCQLDPTRDVLCLRPVGAESRGRPVSGPLGDLPSPSASPVPTIDRAHLSLRGLPVCAFSSAGPCALRFTSARRMETTVNTHMILPKVLHKRTLGLPAMSTIDLEAYFKDCLFKDWEELGEEIRLKVFVLGGCRHKLVCSPAPCNFFTSA.

The tract at residues 68-117 (PCALRFTSARRMETTVNTHMILPKVLHKRTLGLPAMSTIDLEAYFKDCLF) is mitochondrial targeting sequence.

It belongs to the orthohepadnavirus protein X family. In terms of assembly, may form homodimer. May interact with host CEBPA, CFLAR, CREB1, DDB1, E4F1, HBXIP, HSPD1/HSP60, NFKBIA, POLR2E and SMAD4. Interacts with host SMC5-SMC6 complex and induces its degradation. Interacts with host TRPC4AP; leading to prevent ubiquitination of TRPC4AP. Interacts with host PLSCR1; this interaction promotes ubiquitination and degradation of HBx and impairs HBx-mediated cell proliferation. Post-translationally, a fraction may be phosphorylated in insect cells and HepG2 cells, a human hepatoblastoma cell line. Phosphorylated in vitro by host protein kinase C or mitogen-activated protein kinase. N-acetylated in insect cells.

The protein localises to the host cytoplasm. It localises to the host nucleus. Its subcellular location is the host mitochondrion. In terms of biological role, multifunctional protein that plays a role in silencing host antiviral defenses and promoting viral transcription. Does not seem to be essential for HBV infection. May be directly involved in development of cirrhosis and liver cancer (hepatocellular carcinoma). Most of cytosolic activities involve modulation of cytosolic calcium. The effect on apoptosis is controversial depending on the cell types in which the studies have been conducted. May induce apoptosis by localizing in mitochondria and causing loss of mitochondrial membrane potential. May also modulate apoptosis by binding host CFLAR, a key regulator of the death-inducing signaling complex (DISC). Promotes viral transcription by using the host E3 ubiquitin ligase DDB1 to target the SMC5-SMC6 complex to proteasomal degradation. This host complex would otherwise bind to viral episomal DNA, and prevents its transcription. Moderately stimulates transcription of many different viral and cellular transcription elements. Promoters and enhancers stimulated by HBx contain DNA binding sites for NF-kappa-B, AP-1, AP-2, c-EBP, ATF/CREB, or the calcium-activated factor NF-AT. The polypeptide is Protein X (Hepatitis B virus genotype C subtype ayw (isolate Australia/AustRC/1992) (HBV-C)).